Consider the following 440-residue polypeptide: Metacaspase-1 (440 aa).

The segment at 1 to 134 (MFPGSGRKTY…NPQGFGQNSG (134 aa)) is disordered. The segment covering 14 to 51 (APPPGPPNGYQYGPPPGAQGQYPPPQGYPPQGYPPQGY) has biased composition (pro residues). Positions 52 to 81 (PPQGYAPQGYPPQGYAPQGYAPQGYQQQGG) are enriched in low complexity. Residues 82 to 94 (QQQGGQQQGGQQQ) show a composition bias toward gly residues. Over residues 98–110 (RQTYATQEAQNFG) the composition is skewed to polar residues. Active-site residues include histidine 230 and cysteine 286.

It belongs to the peptidase C14B family.

In terms of biological role, involved in cell death (apoptosis). The polypeptide is Metacaspase-1 (MCA1) (Debaryomyces hansenii (strain ATCC 36239 / CBS 767 / BCRC 21394 / JCM 1990 / NBRC 0083 / IGC 2968) (Yeast)).